The chain runs to 186 residues: A-type ATP synthase subunit E (186 aa).

It belongs to the V-ATPase E subunit family. As to quaternary structure, has multiple subunits with at least A(3), B(3), C, D, E, F, H, I and proteolipid K(x).

The protein localises to the cell membrane. Component of the A-type ATP synthase that produces ATP from ADP in the presence of a proton gradient across the membrane. This Methanocella arvoryzae (strain DSM 22066 / NBRC 105507 / MRE50) protein is A-type ATP synthase subunit E.